The primary structure comprises 445 residues: ATP-dependent protease ATPase subunit HslU (445 aa).

ATP-binding positions include Ile-17, 59–64 (GVGKTE), Asp-254, Glu-319, and Arg-391.

It belongs to the ClpX chaperone family. HslU subfamily. As to quaternary structure, a double ring-shaped homohexamer of HslV is capped on each side by a ring-shaped HslU homohexamer. The assembly of the HslU/HslV complex is dependent on binding of ATP.

It is found in the cytoplasm. ATPase subunit of a proteasome-like degradation complex; this subunit has chaperone activity. The binding of ATP and its subsequent hydrolysis by HslU are essential for unfolding of protein substrates subsequently hydrolyzed by HslV. HslU recognizes the N-terminal part of its protein substrates and unfolds these before they are guided to HslV for hydrolysis. This chain is ATP-dependent protease ATPase subunit HslU, found in Pseudomonas syringae pv. tomato (strain ATCC BAA-871 / DC3000).